The sequence spans 346 residues: NADH-ubiquinone oxidoreductase chain 2 (346 aa).

The next 11 helical transmembrane spans lie at 1 to 21 (MNPH…TITI), 25 to 45 (HWVL…PLIS), 60 to 80 (FLTQ…NAWA), 95 to 115 (CLLL…HFWF), 124 to 144 (LMTA…LLLM), 149 to 169 (LNPA…GWMG), 178 to 195 (ILAF…IILV), 200 to 219 (LALL…FMAL), 242 to 262 (ATLM…GFMP), 274 to 294 (EMTP…FFYL), and 326 to 346 (AILA…HAIV).

The protein belongs to the complex I subunit 2 family.

The protein resides in the mitochondrion inner membrane. The catalysed reaction is a ubiquinone + NADH + 5 H(+)(in) = a ubiquinol + NAD(+) + 4 H(+)(out). Functionally, core subunit of the mitochondrial membrane respiratory chain NADH dehydrogenase (Complex I) that is believed to belong to the minimal assembly required for catalysis. Complex I functions in the transfer of electrons from NADH to the respiratory chain. The immediate electron acceptor for the enzyme is believed to be ubiquinone. This chain is NADH-ubiquinone oxidoreductase chain 2 (MT-ND2), found in Anas acuta (Northern pintail).